The chain runs to 474 residues: Microtubule protein alp7 (474 aa).

A compositionally biased stretch (low complexity) spans 1–20 (MSDIVSSSTDYSRRSPSSSS). Disordered stretches follow at residues 1 to 79 (MSDI…DTLN), 93 to 114 (KSFDFSGTPRPMHPISHPLSQH), and 164 to 223 (SLQT…NSTQ). Ser-17 carries the post-translational modification Phosphoserine. Residues 25 to 36 (ETDHTGFHEKRQ) are compositionally biased toward basic and acidic residues. Positions 66 to 76 (SKPNPQLNLKD) are enriched in polar residues. Composition is skewed to polar residues over residues 177–189 (SNGSFPRQTNTAP) and 201–223 (RNSATPSTSQADIPTQYPINSTQ). Coiled-coil stretches lie at residues 219–273 (INST…QLRS) and 367–471 (KISN…LNLE).

In terms of assembly, interacts with alp14.

Its subcellular location is the nucleus. The protein localises to the cytoplasm. It is found in the cytoskeleton. The protein resides in the spindle. It localises to the chromosome. Its subcellular location is the centromere. The protein localises to the kinetochore. Required for bipolar spindle formation and proper chromosome segregation. Has an indirect role in connecting the kinetochores and the plus end of pole to chromosome microtubules by targeting alp14 to the spindle pole body. Involved in the emergence of large microtubule organizing centers (MTOC) in interphase cells. Attaches to the minus ends of microtubules and associates with the sites of microtubule attachment on the nuclear envelope. This leads to the stabilization of the microtubule bundles. The polypeptide is Microtubule protein alp7 (alp7) (Schizosaccharomyces pombe (strain 972 / ATCC 24843) (Fission yeast)).